Consider the following 247-residue polypeptide: Ribosomal RNA small subunit methyltransferase G (247 aa).

Positions 86, 91, and 154 each coordinate S-adenosyl-L-methionine.

Belongs to the methyltransferase superfamily. RNA methyltransferase RsmG family.

It localises to the cytoplasm. Functionally, specifically methylates the N7 position of a guanine in 16S rRNA. The sequence is that of Ribosomal RNA small subunit methyltransferase G from Leptospira biflexa serovar Patoc (strain Patoc 1 / Ames).